A 294-amino-acid polypeptide reads, in one-letter code: 33 kDa chaperonin (294 aa).

2 disulfides stabilise this stretch: Cys-238–Cys-240 and Cys-271–Cys-274.

Belongs to the HSP33 family. Post-translationally, under oxidizing conditions two disulfide bonds are formed involving the reactive cysteines. Under reducing conditions zinc is bound to the reactive cysteines and the protein is inactive.

The protein resides in the cytoplasm. In terms of biological role, redox regulated molecular chaperone. Protects both thermally unfolding and oxidatively damaged proteins from irreversible aggregation. Plays an important role in the bacterial defense system toward oxidative stress. The polypeptide is 33 kDa chaperonin (Staphylococcus haemolyticus (strain JCSC1435)).